We begin with the raw amino-acid sequence, 89 residues long: Arminin 7519 (89 aa).

An N-terminal signal peptide occupies residues 1 to 18; that stretch reads MRSTFAVLFLALIALTYS. Residues 19 to 59 constitute a propeptide that is removed on maturation; the sequence is KNYQDVKEEIKNEVENEILRDLGEDDDELDDNAQEAVNDAR. Ala-86 is modified (alanine amide).

The protein belongs to the arminin family. As to expression, expressed in entodermal epithelium along the body column.

The protein resides in the secreted. Its subcellular location is the target cell membrane. Its function is as follows. Antimicrobial peptide with a broad-spectrum antimicrobial activity. Keeps its antibacterial activity under a wide range of salt concentrations that mimic physiological conditions of human blood, which is surprising, since Hydra is an obligate freshwater animal with nearly no salt tolerance. Does not affect red blood cells. The sequence is that of Arminin 7519 from Hydra vulgaris (Hydra).